Here is a 328-residue protein sequence, read N- to C-terminus: Formimidoylglutamase (328 aa).

Residues His133, Asp159, His161, Asp163, Asp253, and Asp255 each contribute to the Mn(2+) site.

Belongs to the arginase family. Mn(2+) is required as a cofactor.

It carries out the reaction N-formimidoyl-L-glutamate + H2O = formamide + L-glutamate. The protein operates within amino-acid degradation; L-histidine degradation into L-glutamate; L-glutamate from N-formimidoyl-L-glutamate (hydrolase route): step 1/1. Its function is as follows. Catalyzes the conversion of N-formimidoyl-L-glutamate to L-glutamate and formamide. The protein is Formimidoylglutamase of Streptococcus pyogenes serotype M3 (strain ATCC BAA-595 / MGAS315).